Consider the following 702-residue polypeptide: Polyribonucleotide nucleotidyltransferase 2 (702 aa).

2 residues coordinate Mg(2+): Asp483 and Asp489. Positions Pro550–Ile609 constitute a KH domain. One can recognise an S1 motif domain in the interval Gly619 to Lys687.

It belongs to the polyribonucleotide nucleotidyltransferase family. Requires Mg(2+) as cofactor.

It is found in the cytoplasm. The enzyme catalyses RNA(n+1) + phosphate = RNA(n) + a ribonucleoside 5'-diphosphate. Functionally, involved in mRNA degradation. Catalyzes the phosphorolysis of single-stranded polyribonucleotides processively in the 3'- to 5'-direction. This chain is Polyribonucleotide nucleotidyltransferase 2, found in Alkaliphilus metalliredigens (strain QYMF).